The sequence spans 2774 residues: Microtubule-associated protein 1A (2774 aa).

Ser-114, Ser-117, Ser-118, Ser-121, and Ser-155 each carry phosphoserine. The residue at position 177 (Tyr-177) is a Phosphotyrosine. The tract at residues 310–329 (PSKIKHRADSKESLKAAPKT) is disordered. Ser-319 and Ser-322 each carry phosphoserine. Copy 1 of the repeat occupies 336–338 (KRE). The 11 X 3 AA repeats of K-K-[DE] stretch occupies residues 336–541 (KREEVLEEGA…TQDFEELKRE (206 aa)). Positions 342–390 (EEGAKEARSELAKELAKTEKKAKEPSEKPPEKPSKSERVRGESSEALKA) are enriched in basic and acidic residues. Disordered stretches follow at residues 342–718 (EEGA…SFLS), 737–808 (TIPG…TELT), 845–939 (EDQS…VGKE), 957–1078 (FGAP…QTGC), 1093–1344 (ETGE…ILPE), 1357–1646 (QKDG…SPEQ), 1693–1725 (ESTF…KDFQ), 1739–1843 (LAES…VPFS), and 1861–2644 (AELE…LVNG). At Ser-384 the chain carries Phosphoserine. The span at 391 to 406 (EKRRLIKDKAGKKHLK) shows a compositional bias: basic residues. 2 stretches are compositionally biased toward basic and acidic residues: residues 407–464 (EKIS…KPDL) and 484–500 (VKVD…ELSS). Repeat copies occupy residues 415–417 (KKD), 420–422 (KKE), 424–426 (KKE), 427–429 (RKE), 431–433 (KKE), 436–438 (RKE), 440–442 (KKD), 444–446 (KKD), and 449–451 (RKD). Thr-504 carries the phosphothreonine modification. A compositionally biased stretch (low complexity) spans 506 to 516 (PAQKGAAPPAA). 2 positions are modified to phosphoserine: Ser-526 and Ser-527. Composition is skewed to basic and acidic residues over residues 536–554 (EELK…DTGL) and 584–595 (EGEHVEREKEVV). Repeat 11 spans residues 539–541 (KRE). Ser-604 and Ser-611 each carry phosphoserine. Composition is skewed to basic and acidic residues over residues 614-631 (EVEK…REAE) and 638-675 (AARE…ETKA). Ser-643 carries the post-translational modification Phosphoserine. Residue Thr-663 is modified to Phosphothreonine. Phosphoserine occurs at positions 666, 677, 690, and 785. Polar residues-rich tracts occupy residues 845–858 (EDQS…PQTE) and 869–881 (TVTS…TEAT). Phosphoserine is present on residues Ser-872, Ser-875, Ser-876, and Ser-889. Position 892 is a phosphothreonine (Thr-892). Phosphoserine is present on residues Ser-894, Ser-898, Ser-907, Ser-980, Ser-990, Ser-998, Ser-1007, Ser-1013, Ser-1022, Ser-1029, Ser-1037, Ser-1061, Ser-1132, Ser-1134, Ser-1148, Ser-1160, Ser-1178, Ser-1188, Ser-1191, Ser-1197, Ser-1206, and Ser-1209. Positions 1008–1028 (PVEDKSEPRDFQEDSWGETKH) are enriched in basic and acidic residues. A compositionally biased stretch (polar residues) spans 1142–1157 (SVLSVVSPDTTKQEAT). Over residues 1180–1190 (EDTQSLSFSEE) the composition is skewed to polar residues. Over residues 1198–1212 (LDISSKQLSPESLGT) the composition is skewed to polar residues. Over residues 1220-1236 (LGKEERGPVMKAEDDSC) the composition is skewed to basic and acidic residues. Phosphoserine occurs at positions 1252, 1280, 1301, 1304, and 1307. Over residues 1293 to 1308 (TSDSSLTKSPESLSSP) the composition is skewed to low complexity. 5 stretches are compositionally biased toward basic and acidic residues: residues 1317–1336 (WEGK…ETRQ), 1357–1409 (QKDG…EDQG), 1416–1428 (AEKD…RDTD), 1436–1479 (EPRD…EHSI), and 1487–1574 (RAPD…KADS). Phosphoserine is present on residues Ser-1504, Ser-1568, Ser-1574, and Ser-1594. The segment covering 1599–1613 (SKAREQEKKYWKEQD) has biased composition (basic and acidic residues). A phosphoserine mark is found at Ser-1622, Ser-1643, Ser-1715, Ser-1742, Ser-1757, Ser-1763, and Ser-1767. The segment covering 1707–1718 (TPLQHTPRSPWT) has biased composition (polar residues). Thr-1772 bears the Phosphothreonine mark. Residues Ser-1778 and Ser-1784 each carry the phosphoserine modification. The segment covering 1789–1803 (TESTAPMRNEPTTPS) has biased composition (polar residues). Residues 1818–1839 (LPPAPLSPAPAPPTPAPEPHTP) are compositionally biased toward pro residues. Over residues 1873-1885 (KDYRKAEGEREGE) the composition is skewed to basic and acidic residues. Phosphoserine is present on Ser-1897. Basic and acidic residues predominate over residues 1908-1930 (ATRDTEQTEPEQREPTPYPDERS). Position 1923 is a phosphothreonine (Thr-1923). Positions 1984-1997 (SSPASPQNLQSDTP) are enriched in polar residues. A Phosphoserine modification is found at Ser-1988. Residues 2008-2034 (AVPPRQEPDPGPNVEPSITPPAVPPRA) show a composition bias toward pro residues. Thr-2026 is subject to Phosphothreonine. Ser-2043 and Ser-2077 each carry phosphoserine. Residues 2055–2092 (PDRRTPSPKETGRGHWDDGTNDSDLEKGAREQPEKETR) are compositionally biased toward basic and acidic residues. Residues 2115–2125 (SSLSSDSHLGS) show a composition bias toward low complexity. Residues 2144–2153 (PAPPQLPSPA) show a composition bias toward pro residues. Residues Ser-2204, Ser-2221, Ser-2225, Ser-2228, Ser-2229, and Ser-2260 each carry the phosphoserine modification. The segment covering 2226–2237 (EGSSSEATTPVI) has biased composition (polar residues). Residues 2271–2287 (DLTPLSPAPSASLDLAP) are compositionally biased toward low complexity. The span at 2288–2298 (APAPAPAPAPG) shows a compositional bias: pro residues. Low complexity predominate over residues 2299–2309 (LPGDLGDGTLP). Over residues 2352 to 2364 (AEKEEAEAPHAWE) the composition is skewed to basic and acidic residues. At Ser-2424 the chain carries Phosphoserine. Positions 2477 to 2489 (SASDSGSSQSDSD) are enriched in low complexity. The span at 2534-2550 (DPPPTPLPDPRPSPPRP) shows a compositional bias: pro residues. Over residues 2565 to 2575 (GRVERLREKGR) the composition is skewed to basic and acidic residues. Over residues 2613 to 2623 (RTVPRPRSTPS) the composition is skewed to low complexity. Phosphoserine occurs at positions 2620 and 2635.

This sequence belongs to the MAP1 family. 3 different light chains, LC1 (a cleavage product of MAP1B), LC2 (a cleavage product of MAP1A) and LC3 (produced by one of the MAP1LC3 genes), can associate with the MAP1A or MAP1B heavy chains. Interacts with guanylate kinase-like domain of DLG1, DLG2 and DLG4. Binds to CSNK1D. Interacts with TIAM2. In terms of assembly, interacts with ELAVL4. In terms of processing, phosphorylated by CSNK1D. LC2 is generated from MAP1A by proteolytic processing. It is free to associate with both MAP1A and MAP1B. As to expression, brain, heart and muscle.

It is found in the cytoplasm. The protein localises to the cytoskeleton. Structural protein involved in the filamentous cross-bridging between microtubules and other skeletal elements. In Rattus norvegicus (Rat), this protein is Microtubule-associated protein 1A (Map1a).